The sequence spans 90 residues: Serine protease inhibitor Cvsi-1 (90 aa).

The first 19 residues, 1–19, serve as a signal peptide directing secretion; that stretch reads MDVVRTLILCVCLFGLTFA.

Post-translationally, contains 6 disulfide bonds. As to expression, detected in hemolymph (at protein level). In oysters collected in the summer the expression level is highest in the digestive gland with low levels of expression in gill, mantle, labial palp, style-sac midgut, gonad, heart, and hemocyte. In winter expression levels are higher in all tissues with highest expression levels observed in the digestive gland. Within the digestive gland expression is limited to the basophil cells of the digestive diverticula.

The protein localises to the secreted. Its function is as follows. Slow-binding inhibitor of serine proteases. The inhibitor rapidly binds to the protease forming a weak enzyme-inhibitor complex, and this is followed by a slow isomerization forming a tight-binding enzyme-inhibitor complex. Active against subtilisin A, perkinsin and trypsin with dissociation constants of 0.29 nM, 13.7 nM and 17.7 nM respectively. Not active against thermolysin, papain or pepsin. Has antiparasitic activity against the protozoan P.marinus. The sequence is that of Serine protease inhibitor Cvsi-1 from Crassostrea virginica (Eastern oyster).